We begin with the raw amino-acid sequence, 172 residues long: Crossover junction endodeoxyribonuclease RuvC (172 aa).

Active-site residues include aspartate 12, glutamate 71, and aspartate 143. Aspartate 12, glutamate 71, and aspartate 143 together coordinate Mg(2+).

The protein belongs to the RuvC family. Homodimer which binds Holliday junction (HJ) DNA. The HJ becomes 2-fold symmetrical on binding to RuvC with unstacked arms; it has a different conformation from HJ DNA in complex with RuvA. In the full resolvosome a probable DNA-RuvA(4)-RuvB(12)-RuvC(2) complex forms which resolves the HJ. Requires Mg(2+) as cofactor.

Its subcellular location is the cytoplasm. It carries out the reaction Endonucleolytic cleavage at a junction such as a reciprocal single-stranded crossover between two homologous DNA duplexes (Holliday junction).. Functionally, the RuvA-RuvB-RuvC complex processes Holliday junction (HJ) DNA during genetic recombination and DNA repair. Endonuclease that resolves HJ intermediates. Cleaves cruciform DNA by making single-stranded nicks across the HJ at symmetrical positions within the homologous arms, yielding a 5'-phosphate and a 3'-hydroxyl group; requires a central core of homology in the junction. The consensus cleavage sequence is 5'-(A/T)TT(C/G)-3'. Cleavage occurs on the 3'-side of the TT dinucleotide at the point of strand exchange. HJ branch migration catalyzed by RuvA-RuvB allows RuvC to scan DNA until it finds its consensus sequence, where it cleaves and resolves the cruciform DNA. This chain is Crossover junction endodeoxyribonuclease RuvC, found in Coxiella burnetii (strain CbuG_Q212) (Coxiella burnetii (strain Q212)).